Reading from the N-terminus, the 143-residue chain is Nucleoside diphosphate kinase (143 aa).

Positions 11, 59, 87, 93, 104, and 114 each coordinate ATP. Catalysis depends on H117, which acts as the Pros-phosphohistidine intermediate.

The protein belongs to the NDK family. As to quaternary structure, homotetramer. It depends on Mg(2+) as a cofactor.

Its subcellular location is the cytoplasm. The catalysed reaction is a 2'-deoxyribonucleoside 5'-diphosphate + ATP = a 2'-deoxyribonucleoside 5'-triphosphate + ADP. It carries out the reaction a ribonucleoside 5'-diphosphate + ATP = a ribonucleoside 5'-triphosphate + ADP. In terms of biological role, major role in the synthesis of nucleoside triphosphates other than ATP. The ATP gamma phosphate is transferred to the NDP beta phosphate via a ping-pong mechanism, using a phosphorylated active-site intermediate. In Thioalkalivibrio sulfidiphilus (strain HL-EbGR7), this protein is Nucleoside diphosphate kinase.